The chain runs to 277 residues: 3-methyl-2-oxobutanoate hydroxymethyltransferase (277 aa).

Residues D43 and D82 each contribute to the Mg(2+) site. Residues 43 to 44 (DS), D82, and K112 each bind 3-methyl-2-oxobutanoate. E114 lines the Mg(2+) pocket. Residue E181 is the Proton acceptor of the active site.

This sequence belongs to the PanB family. In terms of assembly, homodecamer; pentamer of dimers. Mg(2+) serves as cofactor.

The protein resides in the cytoplasm. The enzyme catalyses 3-methyl-2-oxobutanoate + (6R)-5,10-methylene-5,6,7,8-tetrahydrofolate + H2O = 2-dehydropantoate + (6S)-5,6,7,8-tetrahydrofolate. Its pathway is cofactor biosynthesis; (R)-pantothenate biosynthesis; (R)-pantoate from 3-methyl-2-oxobutanoate: step 1/2. Catalyzes the reversible reaction in which hydroxymethyl group from 5,10-methylenetetrahydrofolate is transferred onto alpha-ketoisovalerate to form ketopantoate. This chain is 3-methyl-2-oxobutanoate hydroxymethyltransferase, found in Listeria monocytogenes serovar 1/2a (strain ATCC BAA-679 / EGD-e).